A 345-amino-acid chain; its full sequence is Histidinol-phosphate aminotransferase (345 aa).

Lys206 is subject to N6-(pyridoxal phosphate)lysine.

This sequence belongs to the class-II pyridoxal-phosphate-dependent aminotransferase family. Histidinol-phosphate aminotransferase subfamily. In terms of assembly, homodimer. It depends on pyridoxal 5'-phosphate as a cofactor.

It catalyses the reaction L-histidinol phosphate + 2-oxoglutarate = 3-(imidazol-4-yl)-2-oxopropyl phosphate + L-glutamate. The protein operates within amino-acid biosynthesis; L-histidine biosynthesis; L-histidine from 5-phospho-alpha-D-ribose 1-diphosphate: step 7/9. The protein is Histidinol-phosphate aminotransferase of Bacteroides fragilis (strain ATCC 25285 / DSM 2151 / CCUG 4856 / JCM 11019 / LMG 10263 / NCTC 9343 / Onslow / VPI 2553 / EN-2).